The chain runs to 70 residues: Small, acid-soluble spore protein 1 (70 aa).

It belongs to the alpha/beta-type SASP family.

In terms of biological role, SASP are bound to spore DNA. They are double-stranded DNA-binding proteins that cause DNA to change to an a-like conformation. They protect the DNA backbone from chemical and enzymatic cleavage and are thus involved in dormant spore's high resistance to UV light. The polypeptide is Small, acid-soluble spore protein 1 (Bacillus subtilis).